Reading from the N-terminus, the 575-residue chain is Serine/threonine-protein phosphatase 2A regulatory subunit B'' subunit beta (575 aa).

Residues 41–131 form a disordered region; sequence APGRDQPTPG…SQSIPTFYFP (91 aa). Residues 388-423 enclose the EF-hand domain; that stretch reads KTPTSIEYWFRCMDLDGDGALSMFELEYFYEEQCRR. Residues aspartate 401, aspartate 403, aspartate 405, and glutamate 412 each coordinate Ca(2+).

In terms of assembly, PP2A consists of a common heterodimeric core enzyme, composed of a 36 kDa catalytic subunit (subunit C) and a 65 kDa constant regulatory subunit (PR65 or subunit A), that associates with a variety of regulatory subunits. Proteins that associate with the core dimer include three families of regulatory subunits B (the R2/B/PR55/B55, R3/B''/PR72/PR130/PR59 and R5/B'/B56 families), the 48 kDa variable regulatory subunit, viral proteins, and cell signaling molecules. Interacts with N-terminal region of CDC6. Interacts with NOD2.

It localises to the nucleus. The B regulatory subunit might modulate substrate selectivity and catalytic activity, and might also direct the localization of the catalytic enzyme to a particular subcellular compartment. The chain is Serine/threonine-protein phosphatase 2A regulatory subunit B'' subunit beta (PPP2R3B) from Homo sapiens (Human).